A 612-amino-acid polypeptide reads, in one-letter code: Dihydroxy-acid dehydratase (612 aa).

D81 is a binding site for Mg(2+). Position 122 (C122) interacts with [2Fe-2S] cluster. D123 and K124 together coordinate Mg(2+). K124 carries the N6-carboxylysine modification. A [2Fe-2S] cluster-binding site is contributed by C195. E491 contributes to the Mg(2+) binding site. S517 functions as the Proton acceptor in the catalytic mechanism.

The protein belongs to the IlvD/Edd family. Homodimer. It depends on [2Fe-2S] cluster as a cofactor. Mg(2+) is required as a cofactor.

The catalysed reaction is (2R)-2,3-dihydroxy-3-methylbutanoate = 3-methyl-2-oxobutanoate + H2O. The enzyme catalyses (2R,3R)-2,3-dihydroxy-3-methylpentanoate = (S)-3-methyl-2-oxopentanoate + H2O. It functions in the pathway amino-acid biosynthesis; L-isoleucine biosynthesis; L-isoleucine from 2-oxobutanoate: step 3/4. It participates in amino-acid biosynthesis; L-valine biosynthesis; L-valine from pyruvate: step 3/4. Functions in the biosynthesis of branched-chain amino acids. Catalyzes the dehydration of (2R,3R)-2,3-dihydroxy-3-methylpentanoate (2,3-dihydroxy-3-methylvalerate) into 2-oxo-3-methylpentanoate (2-oxo-3-methylvalerate) and of (2R)-2,3-dihydroxy-3-methylbutanoate (2,3-dihydroxyisovalerate) into 2-oxo-3-methylbutanoate (2-oxoisovalerate), the penultimate precursor to L-isoleucine and L-valine, respectively. This is Dihydroxy-acid dehydratase from Rhizobium johnstonii (strain DSM 114642 / LMG 32736 / 3841) (Rhizobium leguminosarum bv. viciae).